The following is a 367-amino-acid chain: Biotin synthase (367 aa).

The region spanning cysteine 73–arginine 308 is the Radical SAM core domain. Residues cysteine 91, cysteine 95, and cysteine 98 each contribute to the [4Fe-4S] cluster site. The [2Fe-2S] cluster site is built by cysteine 136, cysteine 173, cysteine 233, and arginine 303.

This sequence belongs to the radical SAM superfamily. Biotin synthase family. As to quaternary structure, homodimer. It depends on [4Fe-4S] cluster as a cofactor. [2Fe-2S] cluster is required as a cofactor.

It carries out the reaction (4R,5S)-dethiobiotin + (sulfur carrier)-SH + 2 reduced [2Fe-2S]-[ferredoxin] + 2 S-adenosyl-L-methionine = (sulfur carrier)-H + biotin + 2 5'-deoxyadenosine + 2 L-methionine + 2 oxidized [2Fe-2S]-[ferredoxin]. Its pathway is cofactor biosynthesis; biotin biosynthesis; biotin from 7,8-diaminononanoate: step 2/2. In terms of biological role, catalyzes the conversion of dethiobiotin (DTB) to biotin by the insertion of a sulfur atom into dethiobiotin via a radical-based mechanism. The sequence is that of Biotin synthase from Picosynechococcus sp. (strain ATCC 27264 / PCC 7002 / PR-6) (Agmenellum quadruplicatum).